We begin with the raw amino-acid sequence, 162 residues long: Deoxyuridine 5'-triphosphate nucleotidohydrolase (162 aa).

The residue at position 11 (Ser-11) is a Phosphoserine. DUTP is bound by residues 83-85 (RSG), 97-103 (GVIDEDY), Gly-108, Arg-151, and 156-157 (FG).

This sequence belongs to the dUTPase family. In terms of assembly, homotrimer. The cofactor is Mg(2+). Phosphorylated in vivo on Ser-11, a reaction that can be catalyzed in vitro by CDC2.

It localises to the nucleus. It carries out the reaction dUTP + H2O = dUMP + diphosphate + H(+). The protein operates within pyrimidine metabolism; dUMP biosynthesis; dUMP from dCTP (dUTP route): step 2/2. In terms of biological role, catalyzes the cleavage of 2'-deoxyuridine 5'-triphosphate (dUTP) into 2'-deoxyuridine 5'-monophosphate (dUMP) and inorganic pyrophosphate and through its action efficiently prevents uracil misincorporation into DNA and at the same time provides dUMP, the substrate for de novo thymidylate biosynthesis. Inhibits peroxisome proliferator-activated receptor (PPAR) activity by binding of its N-terminal to PPAR, preventing the latter's dimerization with retinoid X receptor. Essential for embryonic development. The protein is Deoxyuridine 5'-triphosphate nucleotidohydrolase (Dut) of Mus musculus (Mouse).